Here is a 214-residue protein sequence, read N- to C-terminus: Protein-L-isoaspartate O-methyltransferase (214 aa).

The active site involves serine 61.

Belongs to the methyltransferase superfamily. L-isoaspartyl/D-aspartyl protein methyltransferase family.

It localises to the cytoplasm. The catalysed reaction is [protein]-L-isoaspartate + S-adenosyl-L-methionine = [protein]-L-isoaspartate alpha-methyl ester + S-adenosyl-L-homocysteine. Catalyzes the methyl esterification of L-isoaspartyl residues in peptides and proteins that result from spontaneous decomposition of normal L-aspartyl and L-asparaginyl residues. It plays a role in the repair and/or degradation of damaged proteins. This Paramagnetospirillum magneticum (strain ATCC 700264 / AMB-1) (Magnetospirillum magneticum) protein is Protein-L-isoaspartate O-methyltransferase.